The primary structure comprises 614 residues: Syringomycin synthase SyrB1 (614 aa).

Positions 535-610 constitute a Carrier domain; sequence KGLSEQEHFV…VLADHITRSL (76 aa). Ser-570 carries the post-translational modification O-(pantetheine 4'-phosphoryl)serine.

It belongs to the ATP-dependent AMP-binding enzyme family. Pantetheine 4'-phosphate is required as a cofactor.

It carries out the reaction holo-[peptidyl-carrier protein] + L-threonine + ATP = L-threonyl-[peptidyl-carrier protein] + AMP + diphosphate. Involved in the biosynthesis of syringomycin E, a cyclic lipodepsinonapeptide toxin with phytotoxic activity. Specifically adenylates L-threonine and loads it onto its peptidyl carrier domain, via a thioester linkage to the phosphopanthetheine moiety. Is highly specific for L-threonine. This Pseudomonas syringae pv. syringae protein is Syringomycin synthase SyrB1.